The chain runs to 483 residues: Trigger factor (483 aa).

Residues 162–243 (GDYVSLDLSA…VRGVKEKELP (82 aa)) form the PPIase FKBP-type domain. Residues 459–483 (AVAPGDGDATVEPVEPVEAETDGNG) are disordered. Positions 473–483 (EPVEAETDGNG) are enriched in acidic residues.

The protein belongs to the FKBP-type PPIase family. Tig subfamily.

It is found in the cytoplasm. The catalysed reaction is [protein]-peptidylproline (omega=180) = [protein]-peptidylproline (omega=0). Functionally, involved in protein export. Acts as a chaperone by maintaining the newly synthesized protein in an open conformation. Functions as a peptidyl-prolyl cis-trans isomerase. The sequence is that of Trigger factor from Frankia casuarinae (strain DSM 45818 / CECT 9043 / HFP020203 / CcI3).